The chain runs to 342 residues: Phosphate acyltransferase (342 aa).

This sequence belongs to the PlsX family. In terms of assembly, homodimer. Probably interacts with PlsY.

It is found in the cytoplasm. The catalysed reaction is a fatty acyl-[ACP] + phosphate = an acyl phosphate + holo-[ACP]. It functions in the pathway lipid metabolism; phospholipid metabolism. Functionally, catalyzes the reversible formation of acyl-phosphate (acyl-PO(4)) from acyl-[acyl-carrier-protein] (acyl-ACP). This enzyme utilizes acyl-ACP as fatty acyl donor, but not acyl-CoA. The chain is Phosphate acyltransferase from Shewanella loihica (strain ATCC BAA-1088 / PV-4).